The sequence spans 765 residues: Endosialin (765 aa).

A signal peptide spans 1-17 (MLLRLLLAWVAAVPALG). The Extracellular portion of the chain corresponds to 18–695 (QVPWTPEPRA…GQSQRDDRWL (678 aa)). In terms of domain architecture, C-type lectin spans 30-156 (GPSSCYALFP…CTLAVDGYLC (127 aa)). 6 disulfides stabilise this stretch: Cys-131–Cys-147, Cys-164–Cys-213, Cys-203–Cys-230, Cys-316–Cys-326, Cys-322–Cys-335, and Cys-337–Cys-350. The Sushi domain maps to 162–232 (GACPALPLEV…WSQTGPLCPG (71 aa)). Residues 312–351 (DTDECQIAGVCQQMCVNYVGGFECYCSEGHELEADGISCS) form the EGF-like; calcium-binding domain. O-linked (GalNAc...) threonine glycosylation is found at Thr-401, Thr-428, Thr-448, Thr-456, Thr-459, and Thr-466. O-linked (GalNAc...) serine glycans are attached at residues Ser-467 and Ser-470. Thr-472 carries O-linked (GalNAc...) threonine glycosylation. O-linked (GalNAc...) serine glycosylation is present at Ser-477. O-linked (GalNAc...) threonine glycans are attached at residues Thr-488, Thr-517, Thr-520, Thr-535, Thr-552, Thr-554, Thr-556, Thr-570, Thr-571, Thr-604, and Thr-613. Positions 548 to 675 (MSPDTHTITY…QLPSVPSTAA (128 aa)) are disordered. Residues 622-633 (PAFPSSPLPPQR) are compositionally biased toward pro residues. O-linked (GalNAc...) serine glycans are attached at residues Ser-626 and Ser-627. O-linked (GalNAc...) threonine glycans are attached at residues Thr-635 and Thr-638. Residues 635-647 (TNQTSSISPTHSY) are compositionally biased toward polar residues. Residues Ser-639 and Ser-640 are each glycosylated (O-linked (GalNAc...) serine). Thr-644 carries O-linked (GalNAc...) threonine glycosylation. An O-linked (GalNAc...) serine glycan is attached at Ser-663. Thr-673 carries an O-linked (GalNAc...) threonine glycan. Residues 696 to 716 (LVALLVPTCVFLVVLLALGIV) form a helical membrane-spanning segment. Over 717–765 (YCTRCGSHAPNKRITDCYRWVTHAGNKSSTEPMPPRGSLTGVQTCRTSV) the chain is Cytoplasmic. At Ser-754 the chain carries Phosphoserine.

As to quaternary structure, interacts with PDGFRA; this interaction promotes PDGF receptor signaling pathway. Interacts with integrin beta-1/ITGB1. Interacts with insulin receptor/INSR; this interaction diminishes INSR autophosphorylation. Post-translationally, O-glycosylated by sialylated oligosaccharides. May be N-glycosylated. Expressed in cell lines derived from endothelial cells, embryonic fibroblasts and preadipocytes. Expressed in skeletal muscle by a subset of pericytes.

Its subcellular location is the membrane. Its function is as follows. Cell surface glycoprotein involved in various biological processes including angiogenesis, immune response modulation, and tissue remodeling and repair. Participates in pericyte proliferation through positive modulation of the PDGF receptor signaling pathway. Acts as a scaffold for factor X, triggering allosteric changes and the spatial re-alignment of factor X with the TF-factor VIIa complex, thereby enhancing coagulation activation. Modulates the insulin signaling pathway by interacting with insulin receptor/INSR and by diminishing its capacity to be autophosphorylated in response to insulin. Also regulates LPS-induced inflammatory responses in macrophages by favoring production of proinflammatory cytokines. In Mus musculus (Mouse), this protein is Endosialin (Cd248).